Consider the following 282-residue polypeptide: NADPH-dependent 7-cyano-7-deazaguanine reductase (282 aa).

88–90 serves as a coordination point for substrate; the sequence is IES. Position 90–91 (90–91) interacts with NADPH; that stretch reads SK. Cys-190 serves as the catalytic Thioimide intermediate. Asp-197 acts as the Proton donor in catalysis. Residue 229–230 coordinates substrate; it reads HE. Residue 258 to 259 participates in NADPH binding; that stretch reads RG.

This sequence belongs to the GTP cyclohydrolase I family. QueF type 2 subfamily. As to quaternary structure, homodimer.

It localises to the cytoplasm. It carries out the reaction 7-aminomethyl-7-carbaguanine + 2 NADP(+) = 7-cyano-7-deazaguanine + 2 NADPH + 3 H(+). It participates in tRNA modification; tRNA-queuosine biosynthesis. Catalyzes the NADPH-dependent reduction of 7-cyano-7-deazaguanine (preQ0) to 7-aminomethyl-7-deazaguanine (preQ1). This chain is NADPH-dependent 7-cyano-7-deazaguanine reductase, found in Shigella flexneri serotype 5b (strain 8401).